We begin with the raw amino-acid sequence, 633 residues long: DNA mismatch repair protein MutL (633 aa).

Belongs to the DNA mismatch repair MutL/HexB family.

In terms of biological role, this protein is involved in the repair of mismatches in DNA. It is required for dam-dependent methyl-directed DNA mismatch repair. May act as a 'molecular matchmaker', a protein that promotes the formation of a stable complex between two or more DNA-binding proteins in an ATP-dependent manner without itself being part of a final effector complex. The protein is DNA mismatch repair protein MutL of Pseudomonas putida (strain W619).